We begin with the raw amino-acid sequence, 691 residues long: Inactive TPR repeat-containing thioredoxin TTL3 (691 aa).

2 disordered regions span residues 1–153 and 174–209; these read MSHS…AVSP and MASR…TSGK. A Phosphoserine modification is found at serine 8. Basic and acidic residues predominate over residues 19–39; that stretch reads RFRDLQRNDDDVNKPDFRELD. Phosphoserine occurs at positions 42 and 45. Residues 51 to 79 show a composition bias toward low complexity; sequence GSASSSAAATPTSSSGSSGSASGKPSVSS. Residues 83–93 show a composition bias toward basic and acidic residues; that stretch reads KRLDDAYKSHS. 3 stretches are compositionally biased toward polar residues: residues 94-108, 118-140, and 175-189; these read GELS…TTTR, SSTG…HTSP, and ASRT…CTGT. TPR repeat units lie at residues 220–253, 255–287, 289–321, 327–362, 412–445, 458–491, 492–525, and 527–559; these read PEEL…SPGN, AYRS…DPSY, RAHQ…PDQA, QTLE…GADS, AYVL…DQTN, VVRA…DDSN, SVLY…QPSY, and KALL…LPGD. The 88-residue stretch at 596–683 folds into the Thioredoxin domain; sequence DKFKKSVALP…MVCPSHQFLE (88 aa).

In terms of assembly, interacts with BRL2. As to expression, expressed in embryos and organ primordia in shoot and root. In primary and cauline leaves and petals, is expressed in hydathodes, guard cells, petiole cells and cells associated with differentiating vascular bundles.

In terms of biological role, involved in osmotic and salt stress tolerance. May play a role in the control of meristematic cell size during osmotic stress. May function as an adapter protein for BRL2 and may be required for signaling affecting leaf vascular tissue pattern formation. This is Inactive TPR repeat-containing thioredoxin TTL3 from Arabidopsis thaliana (Mouse-ear cress).